A 330-amino-acid polypeptide reads, in one-letter code: Biotin synthase 2 (330 aa).

The Radical SAM core domain occupies 48–278; sequence MCGDGFDMCS…QAAIRLAGGR (231 aa). [4Fe-4S] cluster contacts are provided by cysteine 66, cysteine 70, and cysteine 73. [2Fe-2S] cluster contacts are provided by serine 111, cysteine 143, cysteine 203, and arginine 273.

It belongs to the radical SAM superfamily. Biotin synthase family. In terms of assembly, homodimer. [4Fe-4S] cluster is required as a cofactor. Requires [2Fe-2S] cluster as cofactor.

It carries out the reaction (4R,5S)-dethiobiotin + (sulfur carrier)-SH + 2 reduced [2Fe-2S]-[ferredoxin] + 2 S-adenosyl-L-methionine = (sulfur carrier)-H + biotin + 2 5'-deoxyadenosine + 2 L-methionine + 2 oxidized [2Fe-2S]-[ferredoxin]. Its pathway is cofactor biosynthesis; biotin biosynthesis; biotin from 7,8-diaminononanoate: step 2/2. In terms of biological role, catalyzes the conversion of dethiobiotin (DTB) to biotin by the insertion of a sulfur atom into dethiobiotin via a radical-based mechanism. The protein is Biotin synthase 2 of Corynebacterium diphtheriae (strain ATCC 700971 / NCTC 13129 / Biotype gravis).